Consider the following 393-residue polypeptide: Chalcone synthase 3 (393 aa).

The active site involves cysteine 166.

Belongs to the thiolase-like superfamily. Chalcone/stilbene synthases family.

The catalysed reaction is (E)-4-coumaroyl-CoA + 3 malonyl-CoA + 3 H(+) = 2',4,4',6'-tetrahydroxychalcone + 3 CO2 + 4 CoA. The protein operates within secondary metabolite biosynthesis; flavonoid biosynthesis. Its function is as follows. The primary product of this enzyme is 4,2',4',6'-tetrahydroxychalcone (also termed naringenin-chalcone or chalcone) which can under specific conditions spontaneously isomerize into naringenin. The protein is Chalcone synthase 3 (CHS3) of Ruta graveolens (Common rue).